An 86-amino-acid chain; its full sequence is U-myrmeciitoxin(01)-Mg1a (86 aa).

An N-terminal signal peptide occupies residues 1 to 26 (MKLLYLLLTLAIIFVLTIVHAPNVEA). The propeptide occupies 27 to 52 (KALADPESDAVGFADAFGDADAEATG). Leucine 85 is modified (leucine amide).

The protein belongs to the formicidae venom precursor-01 superfamily. Expressed by the venom gland. This toxin is detected along the entire venom gland, as well as in the venom reservoir, the venom duct and in the venom. No toxin are detected in the Dufour's gland.

The protein localises to the secreted. Its subcellular location is the target cell membrane. In terms of biological role, toxin that may interact with target cell membranes, producing a concentration-dependent leak in ion conductance, possibly via multimeric pore formation. It produces an immediate sharp increase of calcium concentration in all DRG neurons. This influx in calcium stabilizes without resulting in any observable dye leakage, showing that the effect is not simply cytolytic. This toxin may be one of the major contributors to the pain associated with envenomation. The toxin also displays a weak cytotoxicity (on HEK cells) and some antimicrobial activity (MIC=2.5 uM on C.neoformans (var. grubii), MIC=10.2 uM on S.aureus), but is not hemolytic to human erythtrocytes. In vivo, intraplantar injection into mice causes spontaneous nocifensive behavior (licking, flinching, or shaking of the paw), which lasts 5-7 minutes (10 and 100 uM tested). Mechanical and heat hypoalgesia are observed at 20 and 25 minutes after injection (highest dose tested of 100 uM). In vivo, injection into crickets (A.domesticus) causes an immediate, dose-dependent, reversible and nonlethal incapacitation that lasts about 53 minutes at the highest dose tested (60 ug/g). This Myrmecia gulosa (Red bulldog ant) protein is U-myrmeciitoxin(01)-Mg1a.